A 563-amino-acid polypeptide reads, in one-letter code: Testis-expressed basic protein 1 (563 aa).

A helical transmembrane segment spans residues 3 to 23 (VLEITLAVILTLLGLAILAIL). The segment at 56–81 (GSRHAYSTQSDTSYDNRERSKRDYTP) is disordered. Basic and acidic residues predominate over residues 69 to 79 (YDNRERSKRDY). Residues 99 to 119 (ELILLLMCFILALSRSSIGSI) form a helical membrane-spanning segment. Residues 311-563 (SEMSIPQGQG…GRKYNKKVEE (253 aa)) form a disordered region. Positions 367 to 383 (QVEKSEMGVPRRQESQV) are enriched in basic and acidic residues. A compositionally biased stretch (low complexity) spans 384–395 (KKSQSGVSKGQE). Basic and acidic residues-rich tracts occupy residues 412-447 (QVEK…KKSE) and 485-544 (EAQE…EKSK).

It is found in the membrane. This chain is Testis-expressed basic protein 1, found in Homo sapiens (Human).